A 102-amino-acid polypeptide reads, in one-letter code: Defensin-like protein 285 (102 aa).

Positions 1–28 (MTNLYFKTAFLLSLLLLSFSYQSKLIEA) are cleaved as a signal peptide. 4 disulfide bridges follow: Cys-39–Cys-100, Cys-64–Cys-83, Cys-70–Cys-88, and Cys-75–Cys-90.

It belongs to the DEFL family.

The protein resides in the secreted. This is Defensin-like protein 285 from Arabidopsis thaliana (Mouse-ear cress).